The sequence spans 716 residues: MIYQSPTIQVELLEDNIAKLCFNAPGSVNKFDRETLASLDAALDSIKQNSNIKALVLTSSKDTFIVGADITEFLGLFAQDDAVLLSWVEQANAVFNKLEDLPFPTASAIKGFALGGGCETILATDFRIADTTAKIGLPETKLGIIPGFGGTVRLPRVIGADNALEWISTGNDQRAEDALKVGAVDAVVAPEALEAAAIQMLKDAVAEKLDWQARRNRKLSALTLPKLEAMMSFTTAKGMVFAVAGKHYPAPMAAVSVIEQASTKGRAEALQIEHQAFIKLAKTDVAKALIGIFLNDQLVKGKAKKAGKLAKEVKNAAVLGAGIMGGGIAYQSASKGTPIVMKDIAQPALDLGLNEAAKLLSAQVARGRSTPEKMAKVLNNITPSLDYAALKHSDVVVEAVVEHPKIKAQVLAEVEGYVSEDAIIASNTSTISINLLAKSMKKPERFCGMHFFNPVHKMPLVEVIRGEHSSEETIASVVAYASKMGKTPIVVNDCPGFFVNRVLFPYFAGFNGLLAEGGDFAAIDKVMEKQFGWPMGPAYLLDVVGLDTGHHAQAVMAEGFPDRMGKSGTDAIDVMFENKRLGQKNGKGFYVYSVDSRGKPKKDVDPTSYGLLKDAFGELKTFEADDIIARTMIPMIIETVRCLEEGIVASPAEADMGLVYGLGFPPFRGGVFRYLDTMGVANFVALADKYAHLGGLYQVTDAMRTKATNNGSYYQA.

Residues Met-1–Ala-189 are enoyl-CoA hydratase/isomerase. Asp-296 is a binding site for substrate. Residues Lys-311 to Ala-716 are 3-hydroxyacyl-CoA dehydrogenase. NAD(+) contacts are provided by residues Met-324, Asp-343, Val-400–Glu-402, Lys-407, and Ser-429. Catalysis depends on His-450, which acts as the For 3-hydroxyacyl-CoA dehydrogenase activity. Asn-453 is an NAD(+) binding site. Residues Asn-500 and Tyr-660 each coordinate substrate.

In the N-terminal section; belongs to the enoyl-CoA hydratase/isomerase family. It in the C-terminal section; belongs to the 3-hydroxyacyl-CoA dehydrogenase family. Heterotetramer of two alpha chains (FadB) and two beta chains (FadA).

It catalyses the reaction a (3S)-3-hydroxyacyl-CoA + NAD(+) = a 3-oxoacyl-CoA + NADH + H(+). The catalysed reaction is a (3S)-3-hydroxyacyl-CoA = a (2E)-enoyl-CoA + H2O. The enzyme catalyses a 4-saturated-(3S)-3-hydroxyacyl-CoA = a (3E)-enoyl-CoA + H2O. It carries out the reaction (3S)-3-hydroxybutanoyl-CoA = (3R)-3-hydroxybutanoyl-CoA. It catalyses the reaction a (3Z)-enoyl-CoA = a 4-saturated (2E)-enoyl-CoA. The catalysed reaction is a (3E)-enoyl-CoA = a 4-saturated (2E)-enoyl-CoA. The protein operates within lipid metabolism; fatty acid beta-oxidation. Its function is as follows. Involved in the aerobic and anaerobic degradation of long-chain fatty acids via beta-oxidation cycle. Catalyzes the formation of 3-oxoacyl-CoA from enoyl-CoA via L-3-hydroxyacyl-CoA. It can also use D-3-hydroxyacyl-CoA and cis-3-enoyl-CoA as substrate. This chain is Fatty acid oxidation complex subunit alpha, found in Shewanella putrefaciens (strain CN-32 / ATCC BAA-453).